The chain runs to 94 residues: Putative pterin-4-alpha-carbinolamine dehydratase (94 aa).

The protein belongs to the pterin-4-alpha-carbinolamine dehydratase family.

It catalyses the reaction (4aS,6R)-4a-hydroxy-L-erythro-5,6,7,8-tetrahydrobiopterin = (6R)-L-erythro-6,7-dihydrobiopterin + H2O. This Mycobacterium avium (strain 104) protein is Putative pterin-4-alpha-carbinolamine dehydratase.